The following is a 345-amino-acid chain: MSSAMRKTTNSPVVRRLTAAAVALGSCLALAGPAGSAGAAPADPVPTVFFGDSYTANFGIAPVTNQDSERGWCFQAKENYPAVATRSLADKGITLDVQADVSCGGALIHHFWEKQELPFGAGELPPQQDALKQDTQLTVGSLGGNTLGFNRILKQCSDELRKPSLLPGDPVDGDEPAAKCGEFFGTGDGKQWLDDQFERVGAELEELLDRIGYFAPDAKRVLVGYPRLVPEDTTKCLTAAPGQTQLPFADIPQDALPVLDQIQKRLNDAMKKAAADGGADFVDLYAGTGANTACDGADRGIGGLLEDSQLELLGTKIPWYAHPNDKGRDIQAKQVADKIEEILNR.

The first 39 residues, 1-39 (MSSAMRKTTNSPVVRRLTAAAVALGSCLALAGPAGSAGA), serve as a signal peptide directing secretion. 3 disulfides stabilise this stretch: C73-C103, C156-C180, and C236-C294.

Its subcellular location is the secreted. The sequence is that of Esterase (estA) from Streptomyces scabiei.